The following is a 244-amino-acid chain: Gasdermin-like protein rcd-1-2 (244 aa).

The tract at residues 1 to 22 (MDNEEWFPLKQTHYPPPTIPSM) is disordered.

It belongs to the gasdermin family. As to quaternary structure, heterooligomer; the heterooligomer with rcd-1-1 forms a ring-shaped pore complex when inserted in the membrane.

It localises to the cytoplasm. It is found in the cell membrane. Its function is as follows. Gasdermin-like protein involved in heterokaryon incompatibility, a process that ensures that during spontaneous vegetative cell fusion, only compatible cells from the same colony survive (non-self-recognition). In N.crassa, the rcd-1 locus exists as 2 incompatible alleles, rcd-1-1 (AC Q7SBA0) and rcd-1-2 (this entry). During the allorecognition process, forms a heterooligomer with rcd-1-1, thereby forming a functional gasdermin-like complex that binds to membranes and forms pores, triggering cell death. Binds negatively charged phospholipids, such as cardiolipin and phosphatidylserine. Also binds to phosphoinositides, preferentially to phosphatidylinositol-3-phosphate (PtdIns-3-P), PtdIns-5-P and PtdIns-3,5-P2. This is Gasdermin-like protein rcd-1-2 from Neurospora crassa.